A 492-amino-acid chain; its full sequence is N-succinylglutamate 5-semialdehyde dehydrogenase (492 aa).

220–225 contacts NAD(+); the sequence is GSANTG. Active-site residues include Glu243 and Cys277.

This sequence belongs to the aldehyde dehydrogenase family. AstD subfamily.

It carries out the reaction N-succinyl-L-glutamate 5-semialdehyde + NAD(+) + H2O = N-succinyl-L-glutamate + NADH + 2 H(+). It functions in the pathway amino-acid degradation; L-arginine degradation via AST pathway; L-glutamate and succinate from L-arginine: step 4/5. Catalyzes the NAD-dependent reduction of succinylglutamate semialdehyde into succinylglutamate. This chain is N-succinylglutamate 5-semialdehyde dehydrogenase, found in Escherichia coli O139:H28 (strain E24377A / ETEC).